The following is a 189-amino-acid chain: Peptidyl-tRNA hydrolase (189 aa).

Tyrosine 14 contacts tRNA. Residue histidine 19 is the Proton acceptor of the active site. Residues tyrosine 64, asparagine 66, and asparagine 112 each coordinate tRNA.

It belongs to the PTH family. In terms of assembly, monomer.

The protein resides in the cytoplasm. It carries out the reaction an N-acyl-L-alpha-aminoacyl-tRNA + H2O = an N-acyl-L-amino acid + a tRNA + H(+). Functionally, hydrolyzes ribosome-free peptidyl-tRNAs (with 1 or more amino acids incorporated), which drop off the ribosome during protein synthesis, or as a result of ribosome stalling. Catalyzes the release of premature peptidyl moieties from peptidyl-tRNA molecules trapped in stalled 50S ribosomal subunits, and thus maintains levels of free tRNAs and 50S ribosomes. The protein is Peptidyl-tRNA hydrolase of Dehalococcoides mccartyi (strain CBDB1).